The sequence spans 454 residues: Bifunctional protein GlmU (454 aa).

The tract at residues 1–226 is pyrophosphorylase; sequence MALNVVILAA…AIEVEGANNR (226 aa). UDP-N-acetyl-alpha-D-glucosamine-binding positions include 8 to 11, Lys-22, Gln-73, 78 to 79, 100 to 102, Gly-137, Glu-151, Asn-166, and Asn-224; these read LAAG, GT, and YGD. Asp-102 contacts Mg(2+). Asn-224 contacts Mg(2+). The interval 227–247 is linker; that stretch reads VQLAQLERAYQAREAEKLMIA. An N-acetyltransferase region spans residues 248–454; that stretch reads GANLRDPSRI…GWQRPVKIKE (207 aa). UDP-N-acetyl-alpha-D-glucosamine contacts are provided by Arg-330 and Lys-348. Residue His-360 is the Proton acceptor of the active site. Residues Tyr-363 and Asn-374 each contribute to the UDP-N-acetyl-alpha-D-glucosamine site. Acetyl-CoA contacts are provided by residues Ala-377, 383–384, Ser-402, Ala-420, and Arg-437; that span reads NY.

In the N-terminal section; belongs to the N-acetylglucosamine-1-phosphate uridyltransferase family. This sequence in the C-terminal section; belongs to the transferase hexapeptide repeat family. In terms of assembly, homotrimer. Mg(2+) is required as a cofactor.

It localises to the cytoplasm. It catalyses the reaction alpha-D-glucosamine 1-phosphate + acetyl-CoA = N-acetyl-alpha-D-glucosamine 1-phosphate + CoA + H(+). The catalysed reaction is N-acetyl-alpha-D-glucosamine 1-phosphate + UTP + H(+) = UDP-N-acetyl-alpha-D-glucosamine + diphosphate. It participates in nucleotide-sugar biosynthesis; UDP-N-acetyl-alpha-D-glucosamine biosynthesis; N-acetyl-alpha-D-glucosamine 1-phosphate from alpha-D-glucosamine 6-phosphate (route II): step 2/2. Its pathway is nucleotide-sugar biosynthesis; UDP-N-acetyl-alpha-D-glucosamine biosynthesis; UDP-N-acetyl-alpha-D-glucosamine from N-acetyl-alpha-D-glucosamine 1-phosphate: step 1/1. The protein operates within bacterial outer membrane biogenesis; LPS lipid A biosynthesis. In terms of biological role, catalyzes the last two sequential reactions in the de novo biosynthetic pathway for UDP-N-acetylglucosamine (UDP-GlcNAc). The C-terminal domain catalyzes the transfer of acetyl group from acetyl coenzyme A to glucosamine-1-phosphate (GlcN-1-P) to produce N-acetylglucosamine-1-phosphate (GlcNAc-1-P), which is converted into UDP-GlcNAc by the transfer of uridine 5-monophosphate (from uridine 5-triphosphate), a reaction catalyzed by the N-terminal domain. The protein is Bifunctional protein GlmU of Shewanella sp. (strain MR-7).